The chain runs to 339 residues: Large ribosomal subunit protein uL29 (339 aa).

The tract at residues 1 to 96 is large ribosomal subunit protein uL29; that stretch reads MNDLTKKSVE…FAKQRKAKIE (96 aa). The unknown stretch occupies residues 97-339; sequence QMMAEQQAAE…KTTKKGTGKK (243 aa). Disordered regions lie at residues 129–254 and 311–339; these read VVST…VPTK and KENR…TGKK. Low complexity predominate over residues 145–156; it reads APVAAKKPAAAK. Basic and acidic residues predominate over residues 157–170; the sequence is DFPKQKDVVEEKTA. A compositionally biased stretch (low complexity) spans 171–182; the sequence is TGKPAAPSAKKA. A compositionally biased stretch (basic and acidic residues) spans 185-210; that stretch reads AKKDVAQETKTDKDAALKALIKEKAA. The segment covering 217-238 has biased composition (low complexity); the sequence is KSKTSTPSGKTTVTVKSVTSAK. The span at 239-248 shows a compositional bias: basic and acidic residues; that stretch reads ADIEVPKETS.

Belongs to the universal ribosomal protein uL29 family. Forms homomultimers. Part of the ribosome; radioactive IRS binds to purified ribosomes.

In terms of biological role, specifically binds a DNA inverted repeat sequence (IRS) found downstream of rpsB in one of the ribosomal subunit operons (for genes rpsB, tsf, and unknown gene x). Might be involved in regulation of transcription of the rpsB operon; the IRS may be a control element to attenuate transcription. The chain is Large ribosomal subunit protein uL29 from Spiroplasma citri.